Consider the following 41-residue polypeptide: Histone H2B.3, sperm (41 aa).

The tract at residues 1 to 41 (MPRSPSKSSPKKGSPRKASPKRGGKGAKRAGKGGRRRTVVK) is disordered. Short sequence motifs (SPKK motif) lie at residues 4-7 (SPSK), 9-12 (SPKK), 14-17 (SPRK), and 19-22 (SPKR). Residues 9–41 (SPKKGSPRKASPKRGGKGAKRAGKGGRRRTVVK) show a composition bias toward basic residues. 2 positions are modified to phosphoserine: serine 14 and serine 19.

Belongs to the histone H2B family. In terms of assembly, the nucleosome is a histone octamer containing two molecules each of H2A, H2B, H3 and H4 assembled in one H3-H4 heterotetramer and two H2A-H2B heterodimers. The octamer wraps approximately 147 bp of DNA. Monoubiquitination gives a specific tag for epigenetic transcriptional activation and is also prerequisite for histone H3 'Lys-4' and 'Lys-79' methylation. Post-translationally, phosphorylated on SPKK motifs 3 and 4; which may regulate DNA binding. Dephosphorylated during maturation of spermatids to mature sperm and rephosphorylated at fertilization.

It is found in the nucleus. The protein localises to the chromosome. Core component of nucleosome. Nucleosomes wrap and compact DNA into chromatin, limiting DNA accessibility to the cellular machineries which require DNA as a template. Histones thereby play a central role in transcription regulation, DNA repair, DNA replication and chromosomal stability. DNA accessibility is regulated via a complex set of post-translational modifications of histones, also called histone code, and nucleosome remodeling. The sequence is that of Histone H2B.3, sperm from Echinus esculentus (Sea urchin).